Consider the following 452-residue polypeptide: Trigger factor (452 aa).

Residues 171 to 256 (GDRVTVSFKG…ATKLEAPQET (86 aa)) form the PPIase FKBP-type domain.

It belongs to the FKBP-type PPIase family. Tig subfamily.

The protein localises to the cytoplasm. The catalysed reaction is [protein]-peptidylproline (omega=180) = [protein]-peptidylproline (omega=0). Its function is as follows. Involved in protein export. Acts as a chaperone by maintaining the newly synthesized protein in an open conformation. Functions as a peptidyl-prolyl cis-trans isomerase. The sequence is that of Trigger factor from Rhodopseudomonas palustris (strain ATCC BAA-98 / CGA009).